Reading from the N-terminus, the 249-residue chain is Derlin-2 (249 aa).

Residues 1-21 (MAQAVEEWYRQMPIITRSYLT) lie on the Cytoplasmic side of the membrane. Residues 22 to 42 (AAVVTTVGCTLEIISPYHLYL) traverse the membrane as a helical segment. Over 43-96 (NPKLVVQHYEIWRLVTNFLYFRKMDLDFLFHMFFLARYCKLLEENSFRGRTADF) the chain is Lumenal. Residues 97-117 (FYMLLFGATVLTGIVLIGGMI) traverse the membrane as a helical segment. Residues 118 to 122 (PYISE) are Cytoplasmic-facing. The chain crosses the membrane as a helical span at residues 123 to 143 (TFARILFLSNSLTFMMVYVWS). Residues 144-152 (KHNPFIHMS) lie on the Lumenal side of the membrane. The helical transmembrane segment at 153 to 173 (FLGLFTFTAAYLPWVLLGFSI) threads the bilayer. Residues 174–249 (LVGSSTWVDL…GAMGADPQAQ (76 aa)) lie on the Cytoplasmic side of the membrane.

This sequence belongs to the derlin family.

It localises to the endoplasmic reticulum membrane. Its function is as follows. May be involved in the degradation process of specific misfolded endoplasmic reticulum (ER) luminal proteins. The polypeptide is Derlin-2 (DER2) (Oryza sativa subsp. japonica (Rice)).